Reading from the N-terminus, the 350-residue chain is tRNA pseudouridine synthase D (350 aa).

Catalysis depends on Asp-85, which acts as the Nucleophile. The 151-residue stretch at 160 to 310 folds into the TRUD domain; it reads GVINYFGEQR…EAARRTILLR (151 aa).

The protein belongs to the pseudouridine synthase TruD family.

The enzyme catalyses uridine(13) in tRNA = pseudouridine(13) in tRNA. Responsible for synthesis of pseudouridine from uracil-13 in transfer RNAs. In Idiomarina loihiensis (strain ATCC BAA-735 / DSM 15497 / L2-TR), this protein is tRNA pseudouridine synthase D.